The sequence spans 141 residues: Regulator of ribonuclease activity B (141 aa).

The tract at residues 112–141 is disordered; the sequence is GTYFEDPNAPDDEDDNDDLFPPEEDEPRLH. Acidic residues predominate over residues 119 to 141; it reads NAPDDEDDNDDLFPPEEDEPRLH.

It belongs to the RraB family. As to quaternary structure, interacts with the C-terminal region of Rne.

The protein localises to the cytoplasm. Its function is as follows. Globally modulates RNA abundance by binding to RNase E (Rne) and regulating its endonucleolytic activity. Can modulate Rne action in a substrate-dependent manner by altering the composition of the degradosome. The chain is Regulator of ribonuclease activity B from Xenorhabdus nematophila (strain ATCC 19061 / DSM 3370 / CCUG 14189 / LMG 1036 / NCIMB 9965 / AN6).